The primary structure comprises 479 residues: Sulfate adenylyltransferase subunit 1 (479 aa).

Residues lysine 25 to arginine 239 enclose the tr-type G domain. The G1 stretch occupies residues glycine 34–serine 41. Glycine 34–serine 41 provides a ligand contact to GTP. Residues glycine 92 to aspartate 96 form a G2 region. The segment at aspartate 113–glycine 116 is G3. Residues aspartate 113–histidine 117 and asparagine 168–aspartate 171 each bind GTP. Residues asparagine 168–aspartate 171 form a G4 region. Positions serine 206–leucine 208 are G5.

It belongs to the TRAFAC class translation factor GTPase superfamily. Classic translation factor GTPase family. CysN/NodQ subfamily. In terms of assembly, heterodimer composed of CysD, the smaller subunit, and CysN.

It catalyses the reaction sulfate + ATP + H(+) = adenosine 5'-phosphosulfate + diphosphate. The protein operates within sulfur metabolism; hydrogen sulfide biosynthesis; sulfite from sulfate: step 1/3. Functionally, with CysD forms the ATP sulfurylase (ATPS) that catalyzes the adenylation of sulfate producing adenosine 5'-phosphosulfate (APS) and diphosphate, the first enzymatic step in sulfur assimilation pathway. APS synthesis involves the formation of a high-energy phosphoric-sulfuric acid anhydride bond driven by GTP hydrolysis by CysN coupled to ATP hydrolysis by CysD. The chain is Sulfate adenylyltransferase subunit 1 from Salmonella newport (strain SL254).